Here is a 630-residue protein sequence, read N- to C-terminus: Pentatricopeptide repeat-containing protein At1g26460, mitochondrial (630 aa).

The N-terminal 115 residues, 1–115 (MASHLFTRSR…RALSETLDMN (115 aa)), are a transit peptide targeting the mitochondrion. The interval 42–79 (LLATESTDHDPSNHQSTSTPLPPNPATGSPLYQENWRS) is disordered. The span at 67–77 (ATGSPLYQENW) shows a compositional bias: polar residues. 6 PPR repeats span residues 154–189 (DVNLYNHYLRANLMMGASAGDMLDLVAPMEEFSVEP), 190–224 (NTASYNLVLKAMYQARETEAAMKLLERMLLLGKDS), 227–261 (DDESYDLVIGMHFGVGKNDEAMKVMDTALKSGYML), 468–503 (SVAALNCIILGCANTWDLDRAYQTFEAISASFGLTP), 504–538 (NIDSYNALLYAFGKVKKTFEATNVFEHLVSIGVKP), and 539–573 (DSRTYSLLVDAHLINRDPKSALTVVDDMIKAGFEP).

It belongs to the PPR family. P subfamily.

It is found in the mitochondrion. This Arabidopsis thaliana (Mouse-ear cress) protein is Pentatricopeptide repeat-containing protein At1g26460, mitochondrial.